The sequence spans 799 residues: Target of rapamycin complex 1 subunit TCO89 (799 aa).

The segment at 18-41 (NASTVSHQSKPFRQFSTRSRAKSN) is disordered. Residues Thr-52 and Thr-82 each carry the phosphothreonine modification. Ser-84, Ser-104, Ser-107, Ser-115, and Ser-144 each carry phosphoserine. The span at 97–126 (NQGKRSASFHSPVHNTLLSPKNSSHSNTGT) shows a compositional bias: polar residues. Disordered stretches follow at residues 97–171 (NQGK…DNIE) and 201–284 (LQSP…ADID). The segment covering 147 to 156 (DAQESKKSES) has biased composition (basic and acidic residues). Residues 157 to 170 (TTDEEVECFSEDNI) are compositionally biased toward acidic residues. A phosphoserine mark is found at Ser-203 and Ser-215. The span at 213 to 224 (DKSGTDGKENHR) shows a compositional bias: basic and acidic residues. The segment covering 233–243 (LSSNNYFGESS) has biased composition (polar residues). The span at 244–253 (HSIEHQKDGE) shows a compositional bias: basic and acidic residues. A compositionally biased stretch (polar residues) spans 254–269 (TSPSSIETKLNATSVI). Ser-290 carries the phosphoserine modification. The segment at 324-391 (AHKSNQKPSH…PDDISSAGTK (68 aa)) is disordered. The span at 332–346 (SHSDEQFDQEDHIDA) shows a compositional bias: basic and acidic residues. Over residues 348 to 363 (RSNSSRKSDSSFMSLR) the composition is skewed to low complexity. Ser-397 is subject to Phosphoserine. 2 disordered regions span residues 418–476 (FENS…QSTF) and 538–568 (NKNS…RQSN). Polar residues-rich tracts occupy residues 420 to 429 (NSSSIQNSLG) and 461 to 476 (GRSQ…QSTF). The residue at position 575 (Ser-575) is a Phosphoserine. Residues 663 to 685 (IRKKSHNDAQSIAHSSSDTDHKD) form a disordered region. Position 707 is a phosphoserine (Ser-707).

It belongs to the TORC subunit TCO89 family. As to quaternary structure, the target of rapamycin complex 1 (TORC1) is composed of at least KOG1, LST8, TCO89 and either TOR1 (TORC1-A) or TOR2 (TORC1-B). Interacts with PIB2; following activation of PIB2 by glutamine or cysteine. TORC1 binds to and is inhibited by FKBP-rapamycin.

The protein localises to the cell membrane. Its subcellular location is the vacuole membrane. Functionally, component of TORC1, which regulates multiple cellular processes to control cell growth in response to environmental signals. Nutrient limitation and environmental stress signals cause inactivation of TORC1. Active TORC1 positively controls ribosome biogenesis via control of rRNA, ribosomal protein and tRNA gene expression, and rRNA processing. TORC1 positively controls protein biosynthesis by regulation of mRNA stability, translation initiation factor activity, and high-affinity amino acid permeases that serve to provide amino acids for use by the translation machinery. TORC1 also promotes growth by sequestering a number of nutrient and general stress-responsive transcription factors in the cytoplasm. TORC1 negatively controls macroautophagy, a process to recycle surplus cytoplasmic mass under nutrient starvation conditions. In Saccharomyces cerevisiae (strain ATCC 204508 / S288c) (Baker's yeast), this protein is Target of rapamycin complex 1 subunit TCO89 (TCO89).